We begin with the raw amino-acid sequence, 322 residues long: Serine protease Lpg1137 (322 aa).

Ser-68 is an active-site residue.

It is found in the secreted. The protein localises to the host mitochondrion membrane. Its function is as follows. Serine protease effector that inhibits host cell autophagy by targeting SNX17. Localizes to the host endoplasmic reticulum-mitochondria contact site and catalyzes degradation of host SNX17, thereby impairing endoplasmic reticulum-mitochondria communication, leading to inhibit autophagy as well as staurosporine-induced apoptosis. This is Serine protease Lpg1137 from Legionella pneumophila subsp. pneumophila (strain Philadelphia 1 / ATCC 33152 / DSM 7513).